Reading from the N-terminus, the 112-residue chain is Protein Churchill (112 aa).

Zn(2+) is bound by residues C2, C5, C30, C33, H59, C61, C64, H66, H71, C88, and C91.

Belongs to the Churchill family.

Its function is as follows. Transcriptional activator that mediates FGF signaling during neural development. Plays a role in the regulation of cell movement. Does not bind DNA by itself. The protein is Protein Churchill (Churc1) of Mus musculus (Mouse).